The sequence spans 494 residues: 3-octaprenyl-4-hydroxybenzoate carboxy-lyase (494 aa).

Residue N172 participates in Mn(2+) binding. Residues 175-177 (IYR), 189-191 (RWL), and 194-195 (RG) each bind prenylated FMN. E238 contacts Mn(2+). The Proton donor role is filled by D287.

Belongs to the UbiD family. As to quaternary structure, homohexamer. It depends on prenylated FMN as a cofactor. Requires Mn(2+) as cofactor.

The protein localises to the cell membrane. It catalyses the reaction a 4-hydroxy-3-(all-trans-polyprenyl)benzoate + H(+) = a 2-(all-trans-polyprenyl)phenol + CO2. It participates in cofactor biosynthesis; ubiquinone biosynthesis. In terms of biological role, catalyzes the decarboxylation of 3-octaprenyl-4-hydroxy benzoate to 2-octaprenylphenol, an intermediate step in ubiquinone biosynthesis. The sequence is that of 3-octaprenyl-4-hydroxybenzoate carboxy-lyase from Erwinia tasmaniensis (strain DSM 17950 / CFBP 7177 / CIP 109463 / NCPPB 4357 / Et1/99).